The sequence spans 45 residues: Cytochrome b559 subunit beta (45 aa).

Residues 20–36 (WLALHTLGIPTVFFLGA) traverse the membrane as a helical segment. A heme-binding site is contributed by histidine 24.

This sequence belongs to the PsbE/PsbF family. Heterodimer of an alpha subunit and a beta subunit. PSII is composed of 1 copy each of membrane proteins PsbA, PsbB, PsbC, PsbD, PsbE, PsbF, PsbH, PsbI, PsbJ, PsbK, PsbL, PsbM, PsbT, PsbX, PsbY, PsbZ, Psb30/Ycf12, peripheral proteins PsbO, CyanoQ (PsbQ), PsbU, PsbV and a large number of cofactors. It forms dimeric complexes. It depends on heme b as a cofactor.

The protein resides in the cellular thylakoid membrane. This b-type cytochrome is tightly associated with the reaction center of photosystem II (PSII). PSII is a light-driven water:plastoquinone oxidoreductase that uses light energy to abstract electrons from H(2)O, generating O(2) and a proton gradient subsequently used for ATP formation. It consists of a core antenna complex that captures photons, and an electron transfer chain that converts photonic excitation into a charge separation. The protein is Cytochrome b559 subunit beta of Synechococcus sp. (strain CC9902).